A 166-amino-acid chain; its full sequence is Lipoprotein signal peptidase (166 aa).

Transmembrane regions (helical) follow at residues 10-30, 32-52, 71-91, and 100-120; these read GGALAPWLGISLIVILFDQLT, IAVLKTFAYGAMHALTPFFNL, WQRWAFTALGIGATLVICYLL, and FSLSLALILGGALGNVIDRLI. Active-site residues include aspartate 126 and aspartate 144. Residues 135–155 form a helical membrane-spanning segment; the sequence is WHWPAFNLADSAITVGAVLLI.

This sequence belongs to the peptidase A8 family.

Its subcellular location is the cell inner membrane. It carries out the reaction Release of signal peptides from bacterial membrane prolipoproteins. Hydrolyzes -Xaa-Yaa-Zaa-|-(S,diacylglyceryl)Cys-, in which Xaa is hydrophobic (preferably Leu), and Yaa (Ala or Ser) and Zaa (Gly or Ala) have small, neutral side chains.. The protein operates within protein modification; lipoprotein biosynthesis (signal peptide cleavage). This protein specifically catalyzes the removal of signal peptides from prolipoproteins. This chain is Lipoprotein signal peptidase, found in Burkholderia mallei (strain ATCC 23344).